We begin with the raw amino-acid sequence, 342 residues long: AA9 family lytic polysaccharide monooxygenase AA9-X282 (342 aa).

The first 18 residues, 1 to 18 (MKSFASLLFLAATAAAHA), serve as a signal peptide directing secretion. Residue His-17 coordinates Cu(2+). A phosphothreonine mark is found at Thr-19 and Thr-57. Ser-59 is subject to Phosphoserine. The cysteines at positions 63 and 181 are disulfide-linked. His-93 provides a ligand contact to Cu(2+). His-167 and Gln-176 together coordinate O2. Tyr-178 serves as a coordination point for Cu(2+). Residue Asn-189 is glycosylated (N-linked (GlcNAc...) asparagine). The X282 extension stretch occupies residues 233-263 (SPATVANTPYPTTATWNTALQPTTVPTVTPP). The tract at residues 281-302 (VTSQPPVPPTTQQPPVVTPTAP) is disordered. Pro residues predominate over residues 285-302 (PPVPPTTQQPPVVTPTAP). Positions 306–342 (PLQTQYGQCGGQGWNGPTQCQPPYTCTASNQWYHQCL) constitute a CBM1 domain.

It belongs to the polysaccharide monooxygenase AA9 family. Cu(2+) serves as cofactor.

It localises to the secreted. It catalyses the reaction [(1-&gt;4)-beta-D-glucosyl]n+m + reduced acceptor + O2 = 4-dehydro-beta-D-glucosyl-[(1-&gt;4)-beta-D-glucosyl]n-1 + [(1-&gt;4)-beta-D-glucosyl]m + acceptor + H2O.. In terms of biological role, lytic polysaccharide monooxygenase (LPMO) that depolymerizes crystalline and amorphous polysaccharides via the oxidation of scissile alpha- or beta-(1-4)-glycosidic bonds, yielding C1 oxidation products. Catalysis by LPMOs requires the reduction of the active-site copper from Cu(II) to Cu(I) by a reducing agent and H(2)O(2) or O(2) as a cosubstrate. Shows only weak binding properties to cellulose, and low cellulolytic oxidative activity which questions the involvement of X282 extension-containing AA9 proteins in the degradation of plant cell wall and opens new avenues as to the divergence of function of some AA9 members. The chain is AA9 family lytic polysaccharide monooxygenase AA9-X282 from Coprinopsis cinerea (strain Okayama-7 / 130 / ATCC MYA-4618 / FGSC 9003) (Inky cap fungus).